The chain runs to 103 residues: UPF0145 protein Rsph17025_2361 (103 aa).

Belongs to the UPF0145 family.

This is UPF0145 protein Rsph17025_2361 from Cereibacter sphaeroides (strain ATCC 17025 / ATH 2.4.3) (Rhodobacter sphaeroides).